The following is a 500-amino-acid chain: ATP synthase subunit alpha (500 aa).

Position 169–176 (169–176) interacts with ATP; sequence GDRQTGKT.

This sequence belongs to the ATPase alpha/beta chains family. In terms of assembly, F-type ATPases have 2 components, CF(1) - the catalytic core - and CF(0) - the membrane proton channel. CF(1) has five subunits: alpha(3), beta(3), gamma(1), delta(1), epsilon(1). CF(0) has three main subunits: a(1), b(2) and c(9-12). The alpha and beta chains form an alternating ring which encloses part of the gamma chain. CF(1) is attached to CF(0) by a central stalk formed by the gamma and epsilon chains, while a peripheral stalk is formed by the delta and b chains.

The protein localises to the cell membrane. The catalysed reaction is ATP + H2O + 4 H(+)(in) = ADP + phosphate + 5 H(+)(out). In terms of biological role, produces ATP from ADP in the presence of a proton gradient across the membrane. The alpha chain is a regulatory subunit. The protein is ATP synthase subunit alpha of Lactococcus lactis subsp. lactis (strain IL1403) (Streptococcus lactis).